The chain runs to 404 residues: Probable glucan endo-1,6-beta-glucosidase B (404 aa).

The first 20 residues, 1 to 20, serve as a signal peptide directing secretion; that stretch reads MTTYQTLFLIPLAISTLVTA. Residues N33 and N130 are each glycosylated (N-linked (GlcNAc...) asparagine). E222 acts as the Proton donor in catalysis. N253 and N299 each carry an N-linked (GlcNAc...) asparagine glycan. E324 (nucleophile) is an active-site residue.

This sequence belongs to the glycosyl hydrolase 5 (cellulase A) family.

Its subcellular location is the secreted. It carries out the reaction Random hydrolysis of (1-&gt;6)-linkages in (1-&gt;6)-beta-D-glucans.. Its function is as follows. Beta-glucanases participate in the metabolism of beta-glucan, the main structural component of the cell wall. Acts on lutean, pustulan and 1,6-oligo-beta-D-glucosides. The polypeptide is Probable glucan endo-1,6-beta-glucosidase B (exgB) (Aspergillus terreus (strain NIH 2624 / FGSC A1156)).